We begin with the raw amino-acid sequence, 358 residues long: DNA methyltransferase CcrM (358 aa).

Residues 1–260 (MKFGPETIIH…AKVVPIAPED (260 aa)) are methyltransferase. DNA-binding regions (target strand DNA) lie at residues 31 to 34 (DPPY) and 39 to 45 (GGDLLRP). 2 consecutive DNA-binding regions (non-target strand DNA) follow at residues 93-94 (YH) and 109-110 (WI). H94 is a binding site for dsDNA. Positions 122–132 (MPNFKGTRFAN) form a DNA-binding region, target strand DNA. A DNA-binding region (non-target strand DNA) is located at residues 153–157 (YDALK). DsDNA is bound by residues Q164 and R179. Positions 187–193 (KAHPTQK) form a DNA-binding region, target strand DNA. The RAMA domain maps to 259–355 (EDLDVMGSKR…IDVLRAQVRA (97 aa)). The linker stretch occupies residues 261–270 (LDVMGSKRAE). Positions 267 and 272 each coordinate dsDNA. The non-specific DNA-binding stretch occupies residues 272–358 (RVPFGTIVEA…LRAQVRAGMN (87 aa)). 2 consecutive DNA-binding regions (non-target strand DNA) follow at residues 315–317 (SIH) and 330–332 (NGW). Residue R350 participates in dsDNA binding.

This sequence belongs to the N(4)/N(6)-methyltransferase family. In terms of assembly, homodimer. Post-translationally, rapidly degraded by Lon protease prior to cell division.

The enzyme catalyses a 2'-deoxyadenosine in DNA + S-adenosyl-L-methionine = an N(6)-methyl-2'-deoxyadenosine in DNA + S-adenosyl-L-homocysteine + H(+). A beta subtype methylase that recognizes the double-stranded sequence 5'-GANTC-3' and methylates non-modifed A-2 on the hemimethylated, post-replicative DNA. Opens a bubble in the DNA at the recognition site, allowing precise recognition of the sequence and ensuring enzyme specificity. Functions only in the predivisional cell. Responsible for 5'-GANTC-3' methylation in the cell; methylation of hemimethylated sites generated after replication fork passage occurs late in the predivisional cell, near completion of chromosome replication but prior to cell division. Contributes to the accurate cell-cycle control of DNA replication and cellular morphology. In Caulobacter vibrioides (strain ATCC 19089 / CIP 103742 / CB 15) (Caulobacter crescentus), this protein is DNA methyltransferase CcrM (ccrMIM).